The chain runs to 129 residues: MSYKRGTCLGFIMLLMVSHHHTKGKPLSSLQNLSRLLEDNFERSFGSDEADQQLVPTDSLDQLDPELQWNKNRLEQGDSPHVNEMTLQQLLNDPVGTSRRYRQRNKKGYSRGCFGVKLDRIGAFSGLGC.

Residues 1 to 24 (MSYKRGTCLGFIMLLMVSHHHTKG) form the signal peptide. The propeptide occupies 25 to 107 (KPLSSLQNLS…SRRYRQRNKK (83 aa)). A disulfide bridge connects residues Cys113 and Cys129.

The protein belongs to the natriuretic peptide family.

It localises to the secreted. Its function is as follows. Hormone which plays a role in endochondral ossification through regulation of cartilaginous growth plate chondrocytes proliferation and differentiation. May also be vasoactive and natriuretic. May be important for freshwater adaptation. This chain is C-type natriuretic peptide 1, found in Aquarana catesbeiana (American bullfrog).